Reading from the N-terminus, the 306-residue chain is Ribosomal protein L11 methyltransferase (306 aa).

Residues threonine 152, glycine 179, aspartate 201, and asparagine 243 each contribute to the S-adenosyl-L-methionine site.

This sequence belongs to the methyltransferase superfamily. PrmA family.

Its subcellular location is the cytoplasm. It carries out the reaction L-lysyl-[protein] + 3 S-adenosyl-L-methionine = N(6),N(6),N(6)-trimethyl-L-lysyl-[protein] + 3 S-adenosyl-L-homocysteine + 3 H(+). Methylates ribosomal protein L11. In Geobacter sp. (strain M21), this protein is Ribosomal protein L11 methyltransferase.